A 205-amino-acid polypeptide reads, in one-letter code: MFIPILFLTLTLASADVMTLMESEPQPSTTESRPSMPPINSGKPSVTEKPGVELNPGETVKVKAEQFNTVNPVELKLEKRIPPGRVGSNCIDCAISNLPKAMFSVKVPKLNINFEVSDFPSSRLIFATLAQRVKSIPFIESLSFPSDIQRMQLRALGDVEVLIFIPKFGWKQILKLSDVVSGFDIPKIPSIAPKVESCVGDCLNS.

Residues 23 to 52 are disordered; it reads SEPQPSTTESRPSMPPINSGKPSVTEKPGV.

The protein belongs to the cucumovirus/ilarvirus protein 2b family.

It localises to the host nucleus. Acts as a suppressor of RNA-mediated gene silencing, also known as post-transcriptional gene silencing (PTGS), a mechanism of plant viral defense that limits the accumulation of viral RNAs. May directly interfere with the mobile silencing signal. This chain is Suppressor of silencing 2b, found in Tobacco streak virus (strain WC) (TSV).